The primary structure comprises 184 residues: Peptide deformylase (184 aa).

Positions 111 and 154 each coordinate Fe cation. Residue Glu-155 is part of the active site. His-158 provides a ligand contact to Fe cation.

Belongs to the polypeptide deformylase family. It depends on Fe(2+) as a cofactor.

It carries out the reaction N-terminal N-formyl-L-methionyl-[peptide] + H2O = N-terminal L-methionyl-[peptide] + formate. In terms of biological role, removes the formyl group from the N-terminal Met of newly synthesized proteins. Requires at least a dipeptide for an efficient rate of reaction. N-terminal L-methionine is a prerequisite for activity but the enzyme has broad specificity at other positions. The polypeptide is Peptide deformylase (Macrococcus caseolyticus (strain JCSC5402) (Macrococcoides caseolyticum)).